The primary structure comprises 351 residues: N-formyl peptide receptor 2 (351 aa).

Residues 1–27 (METNFSTPLNEYEEVSYESAGYTVLRI) are Extracellular-facing. N-linked (GlcNAc...) asparagine glycosylation is present at asparagine 4. Residues 28-50 (LPLVVLGVTFVLGVLGNGLVIWV) form a helical membrane-spanning segment. The Cytoplasmic portion of the chain corresponds to 51-61 (AGFRMTRTVTT). Residues 62–83 (ICYLNLALADFSFTATLPFLIV) traverse the membrane as a helical segment. Over 84 to 100 (SMAMGEKWPFGWFLCKL) the chain is Extracellular. Residues cysteine 98 and cysteine 176 are joined by a disulfide bond. The helical transmembrane segment at 101 to 121 (IHIVVDINLFGSVFLIGFIAL) threads the bilayer. Topologically, residues 122–140 (DRCICVLHPVWAQNHRTVS) are cytoplasmic. A helical membrane pass occupies residues 141 to 162 (LAMKVIVGPWILALVLTLPVFL). Over 163–205 (FLTTVTIPNGDTYCTFNFASWGGTPEERLKVAITMLTARGIIR) the chain is Extracellular. Residues 206–226 (FVIGFSLPMSIVAICYGLIAA) traverse the membrane as a helical segment. Over 227-242 (KIHKKGMIKSSRPLRV) the chain is Cytoplasmic. A helical transmembrane segment spans residues 243-266 (LTAVVASFFICWFPFQLVALLGTV). The Extracellular portion of the chain corresponds to 267-286 (WLKEMLFYGKYKIIDILVNP). A helical transmembrane segment spans residues 287–306 (TSSLAFFNSCLNPMLYVFVG). The Cytoplasmic portion of the chain corresponds to 307–351 (QDFRERLIHSLPTSLERALSEDSAPTNDTAANSASPPAETELQAM). A disordered region spans residues 325–351 (LSEDSAPTNDTAANSASPPAETELQAM). The segment covering 329–341 (SAPTNDTAANSAS) has biased composition (polar residues).

It belongs to the G-protein coupled receptor 1 family. In terms of assembly, interacts with Amyloid-beta protein 42, product of APP; the interaction takes place at the cell surface and the complex is then rapidly internalized. (Microbial infection) Interacts with Staphylococcus aureus protein SSL13; this interaction leads to the activation of neutrophils. Detected in lung, bone marrow, neutrophils, spleen and testis.

The protein resides in the cell membrane. Functionally, low affinity receptor for N-formyl-methionyl peptides, which are powerful neutrophil chemotactic factors. Binding of FMLP to the receptor causes activation of neutrophils. This response is mediated via a G-protein that activates a phosphatidylinositol-calcium second messenger system. The activation of LXA4R could result in an anti-inflammatory outcome counteracting the actions of pro-inflammatory signals such as LTB4 (leukotriene B4). Receptor for the chemokine-like protein FAM19A5, mediating FAM19A5-stimulated macrophage chemotaxis and the inhibitory effect on TNFSF11/RANKL-induced osteoclast differentiation. Acts as a receptor for humanin. The polypeptide is N-formyl peptide receptor 2 (FPR2) (Homo sapiens (Human)).